A 219-amino-acid polypeptide reads, in one-letter code: Probable transaldolase (219 aa).

Lys83 functions as the Schiff-base intermediate with substrate in the catalytic mechanism.

The protein belongs to the transaldolase family. Type 3B subfamily.

It localises to the cytoplasm. The enzyme catalyses D-sedoheptulose 7-phosphate + D-glyceraldehyde 3-phosphate = D-erythrose 4-phosphate + beta-D-fructose 6-phosphate. Its pathway is carbohydrate degradation; pentose phosphate pathway; D-glyceraldehyde 3-phosphate and beta-D-fructose 6-phosphate from D-ribose 5-phosphate and D-xylulose 5-phosphate (non-oxidative stage): step 2/3. In terms of biological role, transaldolase is important for the balance of metabolites in the pentose-phosphate pathway. The sequence is that of Probable transaldolase from Cereibacter sphaeroides (strain ATCC 17029 / ATH 2.4.9) (Rhodobacter sphaeroides).